The primary structure comprises 263 residues: Endonuclease 8 (263 aa).

Pro2 (schiff-base intermediate with DNA) is an active-site residue. Glu3 serves as the catalytic Proton donor. Catalysis depends on Lys53, which acts as the Proton donor; for beta-elimination activity. Positions 70, 125, and 169 each coordinate DNA. The segment at 229 to 263 adopts an FPG-type zinc-finger fold; sequence KVFHRDGEPCERCGSIIEKTTLSSRPFYWCPGCQH. Arg253 (proton donor; for delta-elimination activity) is an active-site residue.

The protein belongs to the FPG family. Zn(2+) is required as a cofactor.

It carries out the reaction 2'-deoxyribonucleotide-(2'-deoxyribose 5'-phosphate)-2'-deoxyribonucleotide-DNA = a 3'-end 2'-deoxyribonucleotide-(2,3-dehydro-2,3-deoxyribose 5'-phosphate)-DNA + a 5'-end 5'-phospho-2'-deoxyribonucleoside-DNA + H(+). Functionally, involved in base excision repair of DNA damaged by oxidation or by mutagenic agents. Acts as a DNA glycosylase that recognizes and removes damaged bases. Has a preference for oxidized pyrimidines, such as thymine glycol, 5,6-dihydrouracil and 5,6-dihydrothymine. Has AP (apurinic/apyrimidinic) lyase activity and introduces nicks in the DNA strand. Cleaves the DNA backbone by beta-delta elimination to generate a single-strand break at the site of the removed base with both 3'- and 5'-phosphates. This chain is Endonuclease 8, found in Shigella sonnei (strain Ss046).